The primary structure comprises 44 residues: Small, acid-soluble spore protein N (44 aa).

Residues 1-44 (MGNPKKNSKDFVPNHIGTQSKKAGGNKGKQMQDTTGKQPIVDNG) form a disordered region.

The protein belongs to the SspN family.

The protein resides in the spore core. This is Small, acid-soluble spore protein N from Bacillus cytotoxicus (strain DSM 22905 / CIP 110041 / 391-98 / NVH 391-98).